Here is a 776-residue protein sequence, read N- to C-terminus: Protein translocase subunit SecA 2 (776 aa).

Residues Gln-80, 98–102 (GEGKT), and Asp-486 contribute to the ATP site.

Belongs to the SecA family. Monomer and homodimer. Part of the essential Sec protein translocation apparatus which comprises SecA, SecYEG and auxiliary proteins SecDF. Other proteins may also be involved.

The protein resides in the cell membrane. The protein localises to the cytoplasm. The catalysed reaction is ATP + H2O + cellular proteinSide 1 = ADP + phosphate + cellular proteinSide 2.. Functionally, part of the Sec protein translocase complex. Interacts with the SecYEG preprotein conducting channel. Has a central role in coupling the hydrolysis of ATP to the transfer of proteins into and across the cell membrane, serving as an ATP-driven molecular motor driving the stepwise translocation of polypeptide chains across the membrane. The sequence is that of Protein translocase subunit SecA 2 from Listeria monocytogenes serotype 1/2a (strain 10403S).